A 117-amino-acid polypeptide reads, in one-letter code: NADH-ubiquinone oxidoreductase chain 3 (117 aa).

The next 3 membrane-spanning stretches (helical) occupy residues 4–24, 60–80, and 86–106; these read IILI…LASI, ITII…MIII, and IMIW…GLYH.

It belongs to the complex I subunit 3 family.

The protein resides in the mitochondrion membrane. It catalyses the reaction a ubiquinone + NADH + 5 H(+)(in) = a ubiquinol + NAD(+) + 4 H(+)(out). Functionally, core subunit of the mitochondrial membrane respiratory chain NADH dehydrogenase (Complex I) that is believed to belong to the minimal assembly required for catalysis. Complex I functions in the transfer of electrons from NADH to the respiratory chain. The immediate electron acceptor for the enzyme is believed to be ubiquinone. The polypeptide is NADH-ubiquinone oxidoreductase chain 3 (mt:ND3) (Drosophila subobscura (Fruit fly)).